The following is a 362-amino-acid chain: N-acylethanolamine-hydrolyzing acid amidase (362 aa).

The first 33 residues, 1 to 33 (MGTPAIRAACHGAHLALALLLLLSLSDPWLWAT), serve as a signal peptide directing secretion. N-linked (GlcNAc...) asparagine glycans are attached at residues Asn-42 and Asn-112. The Nucleophile role is filled by Cys-131. N-linked (GlcNAc...) asparagine glycans are attached at residues Asn-314 and Asn-338.

This sequence belongs to the acid ceramidase family. Heterodimer of an alpha and a beta subunit, produced by autocatalytic cleavage. In terms of processing, N-glycosylated. Tunicamycin treatment causes a reduction in specific activity against N-palmitoylethanolamine. Post-translationally, autoproteolytic cleavage at pH 4.5 gives rise to the alpha and beta subunit. Cleavage gives rise to a conformation change that activates the enzyme. The same catalytic Cys residue mediates the autoproteolytic cleavage and subsequent hydrolysis of lipid substrates. Expressed in brain, cecum, colon, heart, ileum, kidney, liver, lung, spleen, stomach, submaxillary gland, testis and thymus.

Its subcellular location is the lysosome. The protein resides in the membrane. It catalyses the reaction N-hexadecanoylethanolamine + H2O = ethanolamine + hexadecanoate. It carries out the reaction an N-(long-chain fatty acyl)ethanolamine + H2O = a long-chain fatty acid + ethanolamine. The enzyme catalyses N-dodecanoylethanolamine + H2O = dodecanoate + ethanolamine. The catalysed reaction is N-tetradecanoylethanolamine + H2O = tetradecanoate + ethanolamine. It catalyses the reaction an N-acylsphing-4-enine + H2O = sphing-4-enine + a fatty acid. It carries out the reaction N-hexadecanoylsphing-4-enine + H2O = sphing-4-enine + hexadecanoate. The enzyme catalyses N-dodecanoylsphing-4-enine + H2O = dodecanoate + sphing-4-enine. Its pathway is lipid metabolism; fatty acid metabolism. With respect to regulation, stimulated by DTT. Stimulated by nonionic detergent of the polyoxyethylenep-t-octylphenylether type (Triton X-100 or Nonidet P-40) whereas 3-[(3-cholamidopropyl)dimethylammonio]propane-1-sulfonate (CHAPS) and octyl alpha-D-glucopyranoside decrease the N-(long-chain-acyl)ethanolamine deacylase activity. Polysorbate 20 (Tween 20) is inhibitory. Stimulated by endogenous phospholipids such as choline- or ethanolamine-containing phospholipids, and dihydrolipoic acid. In terms of biological role, degrades bioactive fatty acid amides to their corresponding acids, with the following preference: N-palmitoylethanolamine &gt; N-myristoylethanolamine &gt; N-stearoylethanolamine &gt; N-oleoylethanolamine &gt; N-linoleoylethanolamine &gt; N-arachidonoylethanolamine. The polypeptide is N-acylethanolamine-hydrolyzing acid amidase (Rattus norvegicus (Rat)).